Consider the following 387-residue polypeptide: Major outer membrane protein P.IA (387 aa).

Residues 1-19 (MRKKLTALVLSALPLAAVA) form the signal peptide.

The protein belongs to the Gram-negative porin family. In terms of assembly, homotrimer.

The protein localises to the cell outer membrane. In terms of biological role, serves as a slightly cation selective porin. Major antigen on the gonococcal cell surface and it may have pathogenic properties in addition to its porin activity. In Neisseria meningitidis serogroup C, this protein is Major outer membrane protein P.IA (porA).